The sequence spans 901 residues: HTH-type transcriptional regulator MalT (901 aa).

ATP is bound at residue 39–46; sequence SPAGYGKT. The region spanning 829 to 894 is the HTH luxR-type domain; sequence ELIRTSPLTQ…AAVQHAQKLL (66 aa). The segment at residues 853–872 is a DNA-binding region (H-T-H motif); it reads NEQIAGELEVAATTIKTHIR.

It belongs to the MalT family. As to quaternary structure, monomer in solution. Oligomerizes to an active state in the presence of the positive effectors ATP and maltotriose.

With respect to regulation, activated by ATP and maltotriose, which are both required for DNA binding. Functionally, positively regulates the transcription of the maltose regulon whose gene products are responsible for uptake and catabolism of malto-oligosaccharides. Specifically binds to the promoter region of its target genes, recognizing a short DNA motif called the MalT box. The chain is HTH-type transcriptional regulator MalT from Shigella flexneri serotype 5b (strain 8401).